A 161-amino-acid chain; its full sequence is uncharacterized protein (161 aa).

2 consecutive transmembrane segments (helical) span residues 13 to 35 (VAAV…PHAN) and 40 to 62 (VFSA…PFIS).

Its subcellular location is the cell membrane. This is an uncharacterized protein from Archaeoglobus fulgidus (strain ATCC 49558 / DSM 4304 / JCM 9628 / NBRC 100126 / VC-16).